The primary structure comprises 192 residues: Imidazoleglycerol-phosphate dehydratase (192 aa).

It belongs to the imidazoleglycerol-phosphate dehydratase family.

It is found in the cytoplasm. It catalyses the reaction D-erythro-1-(imidazol-4-yl)glycerol 3-phosphate = 3-(imidazol-4-yl)-2-oxopropyl phosphate + H2O. The protein operates within amino-acid biosynthesis; L-histidine biosynthesis; L-histidine from 5-phospho-alpha-D-ribose 1-diphosphate: step 6/9. This is Imidazoleglycerol-phosphate dehydratase from Staphylococcus saprophyticus subsp. saprophyticus (strain ATCC 15305 / DSM 20229 / NCIMB 8711 / NCTC 7292 / S-41).